A 230-amino-acid chain; its full sequence is Urease accessory protein UreG (230 aa).

Residues 1 to 31 form a disordered region; that stretch reads MPPHFLSADSTGQPHRHADRPKRVRTPGEPL. Residues 14–25 are compositionally biased toward basic residues; sequence PHRHADRPKRVR. 37–44 contributes to the GTP binding site; that stretch reads GPVGSGKT.

Belongs to the SIMIBI class G3E GTPase family. UreG subfamily. As to quaternary structure, homodimer. UreD, UreF and UreG form a complex that acts as a GTP-hydrolysis-dependent molecular chaperone, activating the urease apoprotein by helping to assemble the nickel containing metallocenter of UreC. The UreE protein probably delivers the nickel.

The protein localises to the cytoplasm. Its function is as follows. Facilitates the functional incorporation of the urease nickel metallocenter. This process requires GTP hydrolysis, probably effectuated by UreG. The sequence is that of Urease accessory protein UreG from Mycobacterium sp. (strain JLS).